The chain runs to 740 residues: E3 ubiquitin-protein ligase WAV3 (740 aa).

The interval 14 to 105 is disordered; it reads PRNSDAAAPD…AISNPSSPRS (92 aa). The segment covering 49 to 67 has biased composition (low complexity); sequence SGGSNPSTPRSTSSPSLRC. The span at 71–90 shows a compositional bias: polar residues; that stretch reads DAQTPTAEQTSTPRSATKSP. The segment at 122 to 167 adopts an RING-type; atypical zinc-finger fold; the sequence is CGICLNSVKTGQGTAKYTAECSHAFHFPCIADYVRKQGKLVCPVCN. A VWFA domain is found at 332-476; the sequence is DLVVVVDVGG…IPVTEHGFGE (145 aa). A disordered region spans residues 677-709; the sequence is QSQHQQQHNQRRRGSERETTTTMTLMDENGEPL.

Interacts with SINAT1, SINAT2, SINAT3, SINAT4, SINAT5, TOR1/SPR2 and FIP2. As to expression, expressed in root tips and leaf primordia.

It catalyses the reaction S-ubiquitinyl-[E2 ubiquitin-conjugating enzyme]-L-cysteine + [acceptor protein]-L-lysine = [E2 ubiquitin-conjugating enzyme]-L-cysteine + N(6)-ubiquitinyl-[acceptor protein]-L-lysine.. Its function is as follows. E3 ubiquitin-protein ligase involved in the regulation of root growth. Acts as a positive regulator of root gravitropism. Possesses E3 protein ligase activity in vitro. The sequence is that of E3 ubiquitin-protein ligase WAV3 from Arabidopsis thaliana (Mouse-ear cress).